Reading from the N-terminus, the 1213-residue chain is Hybrid signal transduction histidine kinase K (1213 aa).

Disordered stretches follow at residues 1-37 (MIEL…NKTN), 98-189 (NNNY…SSSS), 279-392 (NKNV…IPFR), and 495-565 (TTEQ…NYNN). Low complexity-rich tracts occupy residues 98–162 (NNNY…QKDQ), 171–189 (SLSS…SSSS), 279–331 (NKNV…NSGA), 339–371 (NNNN…SNNN), 498–511 (QQQQ…QQQQ), and 522–565 (QRQQ…NYNN). The next 6 helical transmembrane spans lie at 600–618 (IIFN…GSNI), 628–648 (LIIG…IFFW), 652–672 (INKP…SLVI), 676–696 (TGSI…ALTI), 729–749 (IQWS…NLYG), and 768–788 (IIDV…QYFI). The Histidine kinase domain maps to 822–1052 (TMSHEIRTPL…TFWFILPLEE (231 aa)). A Phosphohistidine; by autocatalysis modification is found at histidine 825. The Response regulatory domain occupies 1076-1199 (KVLIAEDNII…QLRSAIEMAI (124 aa)). The residue at position 1125 (aspartate 1125) is a 4-aspartylphosphate.

In terms of processing, activation probably requires transfer of a phosphate group between a histidine in the kinase core (transmitter) domain and an aspartate of the receiver domain.

Its subcellular location is the nucleus membrane. It catalyses the reaction ATP + protein L-histidine = ADP + protein N-phospho-L-histidine.. Its function is as follows. Involved in a signal transduction pathway that regulates morphogenesis and controls entry into the culmination stage. May act via the regA pathway, being activated by a morphogenesis-stimulated ligand, reducing phosphodiesterase regA levels and allowing cAMP level to rise to promote the culmination stage. This protein probably undergoes an ATP-dependent autophosphorylation at a conserved histidine residue in the kinase core, and a phosphoryl group is then transferred to a conserved aspartate residue in the receiver domain. This is Hybrid signal transduction histidine kinase K (dhkK) from Dictyostelium discoideum (Social amoeba).